The following is a 178-amino-acid chain: Large ribosomal subunit protein uL6 (178 aa).

Belongs to the universal ribosomal protein uL6 family. As to quaternary structure, part of the 50S ribosomal subunit.

Functionally, this protein binds to the 23S rRNA, and is important in its secondary structure. It is located near the subunit interface in the base of the L7/L12 stalk, and near the tRNA binding site of the peptidyltransferase center. The chain is Large ribosomal subunit protein uL6 from Buchnera aphidicola subsp. Schizaphis graminum (strain Sg).